Consider the following 684-residue polypeptide: Glycine--tRNA ligase beta subunit (684 aa).

Belongs to the class-II aminoacyl-tRNA synthetase family. In terms of assembly, tetramer of two alpha and two beta subunits.

Its subcellular location is the cytoplasm. The catalysed reaction is tRNA(Gly) + glycine + ATP = glycyl-tRNA(Gly) + AMP + diphosphate. The protein is Glycine--tRNA ligase beta subunit of Pseudomonas aeruginosa (strain ATCC 15692 / DSM 22644 / CIP 104116 / JCM 14847 / LMG 12228 / 1C / PRS 101 / PAO1).